The primary structure comprises 431 residues: Enolase (431 aa).

Gln-166 lines the (2R)-2-phosphoglycerate pocket. The active-site Proton donor is the Glu-208. Asp-245, Glu-288, and Asp-315 together coordinate Mg(2+). Residues Lys-340, Arg-369, Ser-370, and Lys-391 each coordinate (2R)-2-phosphoglycerate. Lys-340 serves as the catalytic Proton acceptor.

It belongs to the enolase family. Mg(2+) is required as a cofactor.

The protein resides in the cytoplasm. It localises to the secreted. It is found in the cell surface. The enzyme catalyses (2R)-2-phosphoglycerate = phosphoenolpyruvate + H2O. It participates in carbohydrate degradation; glycolysis; pyruvate from D-glyceraldehyde 3-phosphate: step 4/5. Its function is as follows. Catalyzes the reversible conversion of 2-phosphoglycerate (2-PG) into phosphoenolpyruvate (PEP). It is essential for the degradation of carbohydrates via glycolysis. The sequence is that of Enolase from Clostridium acetobutylicum (strain ATCC 824 / DSM 792 / JCM 1419 / IAM 19013 / LMG 5710 / NBRC 13948 / NRRL B-527 / VKM B-1787 / 2291 / W).